A 302-amino-acid polypeptide reads, in one-letter code: Deoxyhypusine hydroxylase (302 aa).

Position 1 is an N-acetylmethionine (Met1). HEAT-like PBS-type repeat units follow at residues 54–80 (LKHE…VLQD), 87–113 (VRHE…YSTD), 175–201 (ERYR…GLQC), 206–232 (FRHE…TLAR), and 239–265 (VRHE…HIED). Residues His56, His89, and Glu90 each contribute to the Fe cation site. Fe cation contacts are provided by His208, His241, and Glu242.

This sequence belongs to the deoxyhypusine hydroxylase family. Fe(2+) serves as cofactor.

The enzyme catalyses [eIF5A protein]-deoxyhypusine + AH2 + O2 = [eIF5A protein]-hypusine + A + H2O. It functions in the pathway protein modification; eIF5A hypusination. Its function is as follows. Catalyzes the hydroxylation of the N(6)-(4-aminobutyl)-L-lysine intermediate produced by deoxyhypusine synthase/DHPS on a critical lysine of the eukaryotic translation initiation factor 5A/eIF-5A. This is the second step of the post-translational modification of that lysine into an unusual amino acid residue named hypusine. Hypusination is unique to mature eIF-5A factor and is essential for its function. The sequence is that of Deoxyhypusine hydroxylase from Mus musculus (Mouse).